Reading from the N-terminus, the 270-residue chain is 3-phenylpropionate-dihydrodiol/cinnamic acid-dihydrodiol dehydrogenase (270 aa).

10 to 34 (FITGGGSGLGLALVERFIEEGAQVA) lines the NAD(+) pocket. Serine 143 provides a ligand contact to substrate. Tyrosine 156 serves as the catalytic Proton acceptor.

It belongs to the short-chain dehydrogenases/reductases (SDR) family.

It carries out the reaction 3-(cis-5,6-dihydroxycyclohexa-1,3-dien-1-yl)propanoate + NAD(+) = 3-(2,3-dihydroxyphenyl)propanoate + NADH + H(+). The catalysed reaction is (2E)-3-(cis-5,6-dihydroxycyclohexa-1,3-dien-1-yl)prop-2-enoate + NAD(+) = (2E)-3-(2,3-dihydroxyphenyl)prop-2-enoate + NADH + H(+). It participates in aromatic compound metabolism; 3-phenylpropanoate degradation. Its function is as follows. Converts 3-phenylpropionate-dihydrodiol (PP-dihydrodiol) and cinnamic acid-dihydrodiol (CI-dihydrodiol) into 3-(2,3-dihydroxylphenyl)propanoic acid (DHPP) and 2,3-dihydroxicinnamic acid (DHCI), respectively. This chain is 3-phenylpropionate-dihydrodiol/cinnamic acid-dihydrodiol dehydrogenase, found in Escherichia coli (strain ATCC 8739 / DSM 1576 / NBRC 3972 / NCIMB 8545 / WDCM 00012 / Crooks).